A 265-amino-acid polypeptide reads, in one-letter code: UDP-N-acetylenolpyruvoylglucosamine reductase (265 aa).

Residues 15-169 form the FAD-binding PCMH-type domain; it reads GVGGPAELWT…TRVRLKLKER (155 aa). The active site involves R149. Positions 182-203 are disordered; the sequence is DRARKGQPKRKSAGCAFKNPPG. C196 acts as the Proton donor in catalysis.

Belongs to the MurB family. It depends on FAD as a cofactor.

The protein resides in the cytoplasm. The enzyme catalyses UDP-N-acetyl-alpha-D-muramate + NADP(+) = UDP-N-acetyl-3-O-(1-carboxyvinyl)-alpha-D-glucosamine + NADPH + H(+). It functions in the pathway cell wall biogenesis; peptidoglycan biosynthesis. Its function is as follows. Cell wall formation. In Thermus thermophilus (strain ATCC BAA-163 / DSM 7039 / HB27), this protein is UDP-N-acetylenolpyruvoylglucosamine reductase.